The chain runs to 327 residues: Ferrochelatase 2 (327 aa).

Fe cation is bound by residues H201 and E282.

Belongs to the ferrochelatase family.

It is found in the cytoplasm. The catalysed reaction is heme b + 2 H(+) = protoporphyrin IX + Fe(2+). Its pathway is porphyrin-containing compound metabolism; protoheme biosynthesis; protoheme from protoporphyrin-IX: step 1/1. Functionally, catalyzes the ferrous insertion into protoporphyrin IX. The chain is Ferrochelatase 2 from Shewanella oneidensis (strain ATCC 700550 / JCM 31522 / CIP 106686 / LMG 19005 / NCIMB 14063 / MR-1).